A 237-amino-acid polypeptide reads, in one-letter code: Cyclic nucleotide phosphodiesterase inhibitor (237 aa).

The signal sequence occupies residues 1–20; it reads MAKIIISLILLLSLFSFSYG. Residues Asn28, Asn65, and Asn70 are each glycosylated (N-linked (GlcNAc...) asparagine). 5 Cys-rich CT repeats span residues 57–81, 82–105, 116–139, 140–162, and 163–186; these read DLCHNSACNASTGNCTLTTISCNDN, NPCTDDFCHPGYGCYSVPNSCDPG, DPCTYDFCDALNICRHSETYCNDG, DACTLNTCGVNGCNFTKISCDDN, and DPCTADYCSTLYGCYHEPIECSIK. Asn153 carries an N-linked (GlcNAc...) asparagine glycan. Asn207 carries N-linked (GlcNAc...) asparagine glycosylation.

Its function is as follows. PDI acts by binding stoichiometrically to cyclic nucleotide phosphodiesterase, changing the KM of the enzyme for cAMP from 10 uM to 2 mM. This chain is Cyclic nucleotide phosphodiesterase inhibitor (pdiA), found in Dictyostelium discoideum (Social amoeba).